Here is a 278-residue protein sequence, read N- to C-terminus: MGQKINPNGFRLGISTDHKSRWYADKLYKSYVGEDVAIRKLLSKGMERAGIAKVEIERTRDRVRVDIHTARPGIVIGRRGAEADRIRGELEKLTGKQVQLNILEVKNPEVDAQLVAQGVAEQLSGRVQFRRAMRKAMQTSMRSGAKGIRIQCSGRLNGAEMSRTEFYREGRVPLHTLRADIDYGFYEARTTFGRIGVKVWIYKGEVAGTRAERQAQAAARAGVPGRGGRPQRGGERPSRGSRGDRPTRADRGGDAPTSEATGAATEQAAPAPAENQEG.

One can recognise a KH type-2 domain in the interval 38 to 106 (IRKLLSKGME…QVQLNILEVK (69 aa)). A disordered region spans residues 213–278 (RQAQAAARAG…APAPAENQEG (66 aa)). Low complexity predominate over residues 214-223 (QAQAAARAGV). Residues 232–253 (RGGERPSRGSRGDRPTRADRGG) are compositionally biased toward basic and acidic residues. Low complexity predominate over residues 259–278 (EATGAATEQAAPAPAENQEG).

The protein belongs to the universal ribosomal protein uS3 family. Part of the 30S ribosomal subunit. Forms a tight complex with proteins S10 and S14.

In terms of biological role, binds the lower part of the 30S subunit head. Binds mRNA in the 70S ribosome, positioning it for translation. The chain is Small ribosomal subunit protein uS3 from Nocardioides sp. (strain ATCC BAA-499 / JS614).